A 305-amino-acid chain; its full sequence is Methionyl-tRNA formyltransferase (305 aa).

Position 109–112 (109–112 (SLLP)) interacts with (6S)-5,6,7,8-tetrahydrofolate.

Belongs to the Fmt family.

It catalyses the reaction L-methionyl-tRNA(fMet) + (6R)-10-formyltetrahydrofolate = N-formyl-L-methionyl-tRNA(fMet) + (6S)-5,6,7,8-tetrahydrofolate + H(+). Its function is as follows. Attaches a formyl group to the free amino group of methionyl-tRNA(fMet). The formyl group appears to play a dual role in the initiator identity of N-formylmethionyl-tRNA by promoting its recognition by IF2 and preventing the misappropriation of this tRNA by the elongation apparatus. This chain is Methionyl-tRNA formyltransferase, found in Roseobacter denitrificans (strain ATCC 33942 / OCh 114) (Erythrobacter sp. (strain OCh 114)).